The sequence spans 397 residues: S-adenosylmethionine synthase (397 aa).

Histidine 17 is an ATP binding site. Aspartate 19 provides a ligand contact to Mg(2+). K(+) is bound at residue glutamate 45. L-methionine is bound by residues glutamate 58 and glutamine 101. The flexible loop stretch occupies residues 101–111; sequence QSPDIAQGVDK. Residues 176–178, 243–244, aspartate 252, 258–259, and lysine 279 contribute to the ATP site; these read DGK, RF, and RK. Aspartate 252 is an L-methionine binding site. L-methionine is bound at residue lysine 283.

It belongs to the AdoMet synthase family. Homotetramer; dimer of dimers. Requires Mg(2+) as cofactor. K(+) is required as a cofactor.

The protein resides in the cytoplasm. It carries out the reaction L-methionine + ATP + H2O = S-adenosyl-L-methionine + phosphate + diphosphate. The protein operates within amino-acid biosynthesis; S-adenosyl-L-methionine biosynthesis; S-adenosyl-L-methionine from L-methionine: step 1/1. Its function is as follows. Catalyzes the formation of S-adenosylmethionine (AdoMet) from methionine and ATP. The overall synthetic reaction is composed of two sequential steps, AdoMet formation and the subsequent tripolyphosphate hydrolysis which occurs prior to release of AdoMet from the enzyme. This chain is S-adenosylmethionine synthase, found in Staphylococcus aureus.